A 71-amino-acid chain; its full sequence is Small ribosomal subunit protein bS21 (71 aa).

The tract at residues 39-71 is disordered; it reads EKPTQERKRKAAAAVKRQMRRTSRDVTKRKRLY. A compositionally biased stretch (basic residues) spans 45–71; it reads RKRKAAAAVKRQMRRTSRDVTKRKRLY.

The protein belongs to the bacterial ribosomal protein bS21 family.

In Xylella fastidiosa (strain M12), this protein is Small ribosomal subunit protein bS21.